Consider the following 444-residue polypeptide: Killer cell immunoglobulin-like receptor 3DL1 (444 aa).

Positions 1–21 are cleaved as a signal peptide; sequence MSLMVVSMACVGLFLVQRAGP. Residues 22-340 are Extracellular-facing; sequence HMGGQDKPFL…SKSGNPRHLH (319 aa). 3 Ig-like C2-type domains span residues 42–102, 137–202, and 237–300; these read GGHV…HPHS, GERV…VTHT, and GESV…FRHS. Cystine bridges form between C49/C95, C144/C195, and C244/C293. N-linked (GlcNAc...) asparagine glycans are attached at residues N92, N179, and N273. The segment at 315-334 is disordered; the sequence is VTGNPSSSWPSPTEPSSKSG. Over residues 319-333 the composition is skewed to low complexity; sequence PSSSWPSPTEPSSKS. A helical transmembrane segment spans residues 341–360; that stretch reads ILIGTSVVIILFILLLFFLL. The Cytoplasmic segment spans residues 361–444; it reads HLWCSNKKNA…KPRSKVVSCP (84 aa). Disordered stretches follow at residues 375-394 and 409-444; these read QEPA…QDPE and RKIT…VSCP.

Belongs to the immunoglobulin superfamily.

It is found in the cell membrane. Functionally, receptor on natural killer (NK) cells for HLA Bw4 allele. Inhibits the activity of NK cells thus preventing cell lysis. This Homo sapiens (Human) protein is Killer cell immunoglobulin-like receptor 3DL1.